The sequence spans 62 residues: Flavodoxin (62 aa).

One can recognise a Flavodoxin-like domain in the interval Ile-4–Leu-62.

It belongs to the flavodoxin family. Requires FMN as cofactor.

In terms of biological role, low-potential electron donor to a number of redox enzymes. NifF is the electron donor to nitrogenase. This chain is Flavodoxin (nifF), found in Klebsiella oxytoca.